We begin with the raw amino-acid sequence, 693 residues long: A disintegrin and metalloproteinase with thrombospondin motifs like (693 aa).

Residues 1 to 24 form the signal peptide; sequence MESSVATHWLSAFVILCSFITTQS. Polar residues predominate over residues 67–80; sequence IPTSHPANSNSADS. Positions 67–91 are disordered; the sequence is IPTSHPANSNSADSGKTPHLKTEKV. N-linked (GlcNAc...) asparagine glycosylation is found at Asn124 and Asn194. The 233-residue stretch at 353-585 folds into the Peptidase M12B domain; the sequence is IYPEILVIVD…DTATCLYNSP (233 aa). Disulfide bonds link Cys485–Cys580 and Cys541–Cys564. Residue His514 participates in Zn(2+) binding. The Metal-binding signature appears at 514 to 525; it reads HEVGHLLGAVHD. Glu515 is a catalytic residue. His518 and His524 together coordinate Zn(2+). Asn687 is a glycosylation site (N-linked (GlcNAc...) asparagine).

Zn(2+) serves as cofactor.

Its subcellular location is the secreted. The protein resides in the extracellular space. It is found in the extracellular matrix. In terms of biological role, involved in larval molting and metamorphosis. May degrade extracellular matrix (ECM) and basement membrane (BM) during the development of organs to allow degeneration and remodeling of tissues. In Bombyx mori (Silk moth), this protein is A disintegrin and metalloproteinase with thrombospondin motifs like.